The primary structure comprises 255 residues: Cytochrome c oxidase subunit 2 (255 aa).

The N-terminal stretch at M1–N16 is a signal peptide. At D17–S43 the chain is on the mitochondrial intermembrane side. Residues I44 to V64 form a helical membrane-spanning segment. At N65 to H80 the chain is on the mitochondrial matrix side. A helical membrane pass occupies residues G81–F101. At P102–A255 the chain is on the mitochondrial intermembrane side. H189, C224, E226, C228, H232, and M235 together coordinate Cu cation. A Mg(2+)-binding site is contributed by E226.

Belongs to the cytochrome c oxidase subunit 2 family. In terms of assembly, component of the cytochrome c oxidase (complex IV, CIV), a multisubunit enzyme composed of a catalytic core of 3 subunits and several supernumerary subunits. The complex exists as a monomer or a dimer and forms supercomplexes (SCs) in the inner mitochondrial membrane with ubiquinol-cytochrome c oxidoreductase (cytochrome b-c1 complex, complex III, CIII). The cofactor is Cu cation.

Its subcellular location is the mitochondrion inner membrane. It catalyses the reaction 4 Fe(II)-[cytochrome c] + O2 + 8 H(+)(in) = 4 Fe(III)-[cytochrome c] + 2 H2O + 4 H(+)(out). Component of the cytochrome c oxidase, the last enzyme in the mitochondrial electron transport chain which drives oxidative phosphorylation. The respiratory chain contains 3 multisubunit complexes succinate dehydrogenase (complex II, CII), ubiquinol-cytochrome c oxidoreductase (cytochrome b-c1 complex, complex III, CIII) and cytochrome c oxidase (complex IV, CIV), that cooperate to transfer electrons derived from NADH and succinate to molecular oxygen, creating an electrochemical gradient over the inner membrane that drives transmembrane transport and the ATP synthase. Cytochrome c oxidase is the component of the respiratory chain that catalyzes the reduction of oxygen to water. Electrons originating from reduced cytochrome c in the intermembrane space (IMS) are transferred via the dinuclear copper A center (CU(A)) of subunit 2 and heme A of subunit 1 to the active site in subunit 1, a binuclear center (BNC) formed by heme A3 and copper B (CU(B)). The BNC reduces molecular oxygen to 2 water molecules using 4 electrons from cytochrome c in the IMS and 4 protons from the mitochondrial matrix. In Mycosarcoma maydis (Corn smut fungus), this protein is Cytochrome c oxidase subunit 2 (COX2).